The primary structure comprises 284 residues: Proteasome subunit beta (284 aa).

The propeptide at M1–G56 is removed in mature form; by autocatalysis. Residue T57 is the Nucleophile of the active site.

Belongs to the peptidase T1B family. As to quaternary structure, the 20S proteasome core is composed of 14 alpha and 14 beta subunits that assemble into four stacked heptameric rings, resulting in a barrel-shaped structure. The two inner rings, each composed of seven catalytic beta subunits, are sandwiched by two outer rings, each composed of seven alpha subunits. The catalytic chamber with the active sites is on the inside of the barrel. Has a gated structure, the ends of the cylinder being occluded by the N-termini of the alpha-subunits. Is capped by the proteasome-associated ATPase, ARC.

The protein resides in the cytoplasm. The catalysed reaction is Cleavage of peptide bonds with very broad specificity.. The protein operates within protein degradation; proteasomal Pup-dependent pathway. Its activity is regulated as follows. The formation of the proteasomal ATPase ARC-20S proteasome complex, likely via the docking of the C-termini of ARC into the intersubunit pockets in the alpha-rings, may trigger opening of the gate for substrate entry. Interconversion between the open-gate and close-gate conformations leads to a dynamic regulation of the 20S proteasome proteolysis activity. Its function is as follows. Component of the proteasome core, a large protease complex with broad specificity involved in protein degradation. In Saccharopolyspora erythraea (strain ATCC 11635 / DSM 40517 / JCM 4748 / NBRC 13426 / NCIMB 8594 / NRRL 2338), this protein is Proteasome subunit beta.